A 284-amino-acid chain; its full sequence is Expansin-A17 (284 aa).

A signal peptide spans 1-21 (MASSWNNPAIFLAAALAVATA). Residues 71 to 185 (GGACGYVSND…RRVPCQRTGG (115 aa)) form the Expansin-like EG45 domain. The Expansin-like CBD domain occupies 195–279 (YWLLLYVMNV…WWITGLCYQG (85 aa)).

This sequence belongs to the expansin family. Expansin A subfamily. As to expression, expressed in roots.

It is found in the secreted. It localises to the cell wall. The protein resides in the membrane. In terms of biological role, may cause loosening and extension of plant cell walls by disrupting non-covalent bonding between cellulose microfibrils and matrix glucans. No enzymatic activity has been found. May be required for rapid internodal elongation in deepwater rice during submergence. This Oryza sativa subsp. japonica (Rice) protein is Expansin-A17 (EXPA17).